The following is a 400-amino-acid chain: Ribose-phosphate pyrophosphokinase 2, chloroplastic (400 aa).

The N-terminal 44 residues, 1–44, are a transit peptide targeting the chloroplast; that stretch reads MASLALTSPPSVKIPSYLSSSSSSLFSRSSISFRTTESRSRICV. The Mg(2+) site is built by Asp214, His216, Asp225, and Asp229. The interval 300–315 is binding of phosphoribosylpyrophosphate; it reads GKVAVMVDDIIDTAGT.

It belongs to the ribose-phosphate pyrophosphokinase family.

It localises to the plastid. The protein resides in the chloroplast. It catalyses the reaction D-ribose 5-phosphate + ATP = 5-phospho-alpha-D-ribose 1-diphosphate + AMP + H(+). The sequence is that of Ribose-phosphate pyrophosphokinase 2, chloroplastic (PRS2) from Arabidopsis thaliana (Mouse-ear cress).